A 344-amino-acid polypeptide reads, in one-letter code: Unsaturated rhamnogalacturonyl hydrolase YesR (344 aa).

Substrate is bound by residues 30–31, N74, and 118–128; these read DW and QHTVNAAEYVF. The Proton donor role is filled by D135. Residues 198-202 and 308-309 contribute to the substrate site; these read RANGW and NA.

Belongs to the glycosyl hydrolase 105 family. In terms of assembly, monomer.

The protein localises to the cytoplasm. It carries out the reaction 2-O-(4-deoxy-beta-L-threo-hex-4-enopyranuronosyl)-alpha-L-rhamnose + H2O = 5-dehydro-4-deoxy-D-glucuronate + L-rhamnopyranose. Its function is as follows. Catalyzes the hydrolysis of unsaturated rhamnogalacturonan disaccharide to yield unsaturated D-galacturonic acid and L-rhamnose. It cannot act on unsaturated glucuronyl hydrolase (UGL) substrates containing unsaturated D-glucuronic acid at the non-reducing terminus, although the active pockets of YesR and UGL are very similar. The protein is Unsaturated rhamnogalacturonyl hydrolase YesR (yesR) of Bacillus subtilis (strain 168).